Consider the following 361-residue polypeptide: Large ribosomal subunit protein mL45 (361 aa).

Belongs to the mitochondrion-specific ribosomal protein mL45 family.

The protein localises to the mitochondrion. The sequence is that of Large ribosomal subunit protein mL45 (mrpl-45) from Caenorhabditis briggsae.